The chain runs to 238 residues: Large ribosomal subunit protein uL2 (238 aa).

Positions 198–238 (NHPHGGGSHQSPSFPTTVSRNAPPGRKVGHIAARSTGRRKR) are disordered. Positions 206–217 (HQSPSFPTTVSR) are enriched in polar residues.

It belongs to the universal ribosomal protein uL2 family. As to quaternary structure, part of the 50S ribosomal subunit. Forms a bridge to the 30S subunit in the 70S ribosome.

One of the primary rRNA binding proteins. Required for association of the 30S and 50S subunits to form the 70S ribosome, for tRNA binding and peptide bond formation. It has been suggested to have peptidyltransferase activity; this is somewhat controversial. Makes several contacts with the 16S rRNA in the 70S ribosome. In Hyperthermus butylicus (strain DSM 5456 / JCM 9403 / PLM1-5), this protein is Large ribosomal subunit protein uL2.